Here is a 347-residue protein sequence, read N- to C-terminus: DNA-directed RNA polymerase subunit alpha (347 aa).

The segment at 1 to 243 is alpha N-terminal domain (alpha-NTD); the sequence is MLIKQGERLI…DQISVFINFD (243 aa). An alpha C-terminal domain (alpha-CTD) region spans residues 260–347; it reads VNEHLFKSID…EWKRKQQNEA (88 aa).

It belongs to the RNA polymerase alpha chain family. In terms of assembly, homodimer. The RNAP catalytic core consists of 2 alpha, 1 beta, 1 beta' and 1 omega subunit. When a sigma factor is associated with the core the holoenzyme is formed, which can initiate transcription.

It carries out the reaction RNA(n) + a ribonucleoside 5'-triphosphate = RNA(n+1) + diphosphate. Its function is as follows. DNA-dependent RNA polymerase catalyzes the transcription of DNA into RNA using the four ribonucleoside triphosphates as substrates. This is DNA-directed RNA polymerase subunit alpha from Desulfovibrio desulfuricans (strain ATCC 27774 / DSM 6949 / MB).